The chain runs to 270 residues: Dermonecrotic toxin LhSicTox-alphaIA2aiii (270 aa).

Residue H2 is part of the active site. Residues E22 and D24 each contribute to the Mg(2+) site. H38 (nucleophile) is an active-site residue. Intrachain disulfides connect C42/C48 and C44/C187. D82 provides a ligand contact to Mg(2+).

Belongs to the arthropod phospholipase D family. Class II subfamily. The cofactor is Mg(2+). In terms of tissue distribution, expressed by the venom gland.

The protein resides in the secreted. It carries out the reaction an N-(acyl)-sphingosylphosphocholine = an N-(acyl)-sphingosyl-1,3-cyclic phosphate + choline. The catalysed reaction is an N-(acyl)-sphingosylphosphoethanolamine = an N-(acyl)-sphingosyl-1,3-cyclic phosphate + ethanolamine. It catalyses the reaction a 1-acyl-sn-glycero-3-phosphocholine = a 1-acyl-sn-glycero-2,3-cyclic phosphate + choline. The enzyme catalyses a 1-acyl-sn-glycero-3-phosphoethanolamine = a 1-acyl-sn-glycero-2,3-cyclic phosphate + ethanolamine. Its function is as follows. Dermonecrotic toxins cleave the phosphodiester linkage between the phosphate and headgroup of certain phospholipids (sphingolipid and lysolipid substrates), forming an alcohol (often choline) and a cyclic phosphate. This toxin acts on sphingomyelin (SM). It may also act on ceramide phosphoethanolamine (CPE), lysophosphatidylcholine (LPC) and lysophosphatidylethanolamine (LPE), but not on lysophosphatidylserine (LPS), and lysophosphatidylglycerol (LPG). It acts by transphosphatidylation, releasing exclusively cyclic phosphate products as second products. Induces dermonecrosis, hemolysis, increased vascular permeability, edema, inflammatory response, and platelet aggregation. The protein is Dermonecrotic toxin LhSicTox-alphaIA2aiii of Loxosceles hirsuta (Recluse spider).